Consider the following 97-residue polypeptide: HssA/B-like protein 48 (97 aa).

Disordered stretches follow at residues 1–20 (MTLF…SKSS) and 78–97 (GSGY…CCGI).

This sequence belongs to the hssA/B family.

This Dictyostelium discoideum (Social amoeba) protein is HssA/B-like protein 48 (hssl48).